A 93-amino-acid polypeptide reads, in one-letter code: Cell division protein FtsB (93 aa).

Topologically, residues 1–3 (MRL) are cytoplasmic. Residues 4-21 (FILSLFALLVMFQYDFWF) form a helical membrane-spanning segment. The Periplasmic segment spans residues 22-93 (GKNGYLDYQD…FYRIVKNKNR (72 aa)). A coiled-coil region spans residues 28–76 (DYQDIKAEIIQRKQENKKLSQRNQTIFAEIQDLKNGIEAIEERARMEHE).

The protein belongs to the FtsB family. In terms of assembly, part of a complex composed of FtsB, FtsL and FtsQ.

It is found in the cell inner membrane. Essential cell division protein. May link together the upstream cell division proteins, which are predominantly cytoplasmic, with the downstream cell division proteins, which are predominantly periplasmic. This Histophilus somni (strain 129Pt) (Haemophilus somnus) protein is Cell division protein FtsB.